The chain runs to 209 residues: Probable nicotinate-nucleotide adenylyltransferase (209 aa).

Belongs to the NadD family.

The catalysed reaction is nicotinate beta-D-ribonucleotide + ATP + H(+) = deamido-NAD(+) + diphosphate. Its pathway is cofactor biosynthesis; NAD(+) biosynthesis; deamido-NAD(+) from nicotinate D-ribonucleotide: step 1/1. Its function is as follows. Catalyzes the reversible adenylation of nicotinate mononucleotide (NaMN) to nicotinic acid adenine dinucleotide (NaAD). This chain is Probable nicotinate-nucleotide adenylyltransferase, found in Idiomarina loihiensis (strain ATCC BAA-735 / DSM 15497 / L2-TR).